Reading from the N-terminus, the 383-residue chain is MQTWQLPEHIADVLPTNARQLESAREQLLALFRVHGYELVQPPLMEYAHSLLTHIDAGLSLKTILVTDRLSGRQLGIRADITPQVARIDAHLLSANQGINRLCYAGPVLHAQPDGLLNMREPLQAGAEMYGFADIRGDIELIDLMLKSMKIADMGKVLLSLGHIGIFRALSDAAHLDAGQSATLLALMQDKDTGAVEAQVKAWKLDGMWAKAFSLLPRLYGGREVLSDARGRLPDLSAVGGALGELQAVCDAFPDCEIHIDLSELRVDNYHTGLLYAAYAADFHDAVARGGRYDGLGGYFGRARPATGFSFDLRSFIGRLPAIERQPAVLVDAEDAEAAREAVEALREQGQCVVIDYGIGHNVSEELAGRLKKTDGVWQVVKR.

It belongs to the class-II aminoacyl-tRNA synthetase family. HisZ subfamily. Heteromultimer composed of HisG and HisZ subunits.

It is found in the cytoplasm. Its pathway is amino-acid biosynthesis; L-histidine biosynthesis; L-histidine from 5-phospho-alpha-D-ribose 1-diphosphate: step 1/9. In terms of biological role, required for the first step of histidine biosynthesis. May allow the feedback regulation of ATP phosphoribosyltransferase activity by histidine. In Neisseria meningitidis serogroup C (strain 053442), this protein is ATP phosphoribosyltransferase regulatory subunit.